A 131-amino-acid chain; its full sequence is Protein FAM107B (131 aa).

A2 is subject to N-acetylalanine. The tract at residues 39 to 79 (MNQKRGLAPQNKPELQKVMEKRRRDQVIKQKEEEAQKKKSD) is disordered. Position 50 is an N6-acetyllysine (K50). Basic and acidic residues predominate over residues 52–79 (ELQKVMEKRRRDQVIKQKEEEAQKKKSD). Residues 61-112 (RRDQVIKQKEEEAQKKKSDLEIELLKRQQKLEQLELEKQKLQEEQENAPEFV) adopt a coiled-coil conformation.

This sequence belongs to the FAM107 family. As to expression, expressed in the hippocampus and hypothalamus. Expressed in the pontine nuclei and reticulotegmental nucleus. Expressed in Purkinje cell and nuclear layers of the cerebelum. Expressed in the choroid plexus. Expressed in hippocampal granule neurons of the dente gyrus.

The chain is Protein FAM107B from Mus musculus (Mouse).